A 281-amino-acid polypeptide reads, in one-letter code: 2,3,4,5-tetrahydropyridine-2,6-dicarboxylate N-succinyltransferase (281 aa).

Substrate contacts are provided by Arg-108 and Asp-145.

Belongs to the transferase hexapeptide repeat family. Homotrimer.

Its subcellular location is the cytoplasm. It carries out the reaction (S)-2,3,4,5-tetrahydrodipicolinate + succinyl-CoA + H2O = (S)-2-succinylamino-6-oxoheptanedioate + CoA. Its pathway is amino-acid biosynthesis; L-lysine biosynthesis via DAP pathway; LL-2,6-diaminopimelate from (S)-tetrahydrodipicolinate (succinylase route): step 1/3. The polypeptide is 2,3,4,5-tetrahydropyridine-2,6-dicarboxylate N-succinyltransferase (Rhodopseudomonas palustris (strain ATCC BAA-98 / CGA009)).